The chain runs to 224 residues: Ribonuclease T (224 aa).

Positions 1–11 (MSEDLYEDDQD) are enriched in acidic residues. A disordered region spans residues 1–20 (MSEDLYEDDQDSQVSSGSRH). Residues 32-206 (VVVDVETGGF…YDTEKTAELF (175 aa)) form the Exonuclease domain. Residues Asp-35, Glu-37, His-193, and Asp-198 each contribute to the Mg(2+) site. His-193 serves as the catalytic Proton donor/acceptor.

This sequence belongs to the RNase T family. In terms of assembly, homodimer. The cofactor is Mg(2+).

Trims short 3' overhangs of a variety of RNA species, leaving a one or two nucleotide 3' overhang. Responsible for the end-turnover of tRNA: specifically removes the terminal AMP residue from uncharged tRNA (tRNA-C-C-A). Also appears to be involved in tRNA biosynthesis. This Pseudomonas entomophila (strain L48) protein is Ribonuclease T.